A 508-amino-acid polypeptide reads, in one-letter code: UBX domain-containing protein 4 (508 aa).

The tract at residues 1 to 200 is interaction with UBQLN1; that stretch reads MLWFQGAIPA…PTEDLTVRVE (200 aa). Residues 1-413 are Cytoplasmic-facing; sequence MLWFQGAIPA…VHSSSGDFWT (413 aa). The segment at 117–199 is disordered; the sequence is GEASLANGSQ…RPTEDLTVRV (83 aa). Polar residues predominate over residues 122–190; that stretch reads ANGSQSEGSV…QEPSGCSNQR (69 aa). Residues 315 to 393 enclose the UBX domain; that stretch reads ERSTVARIQF…ELAPSASVVL (79 aa). The stretch at 414-434 is an intramembrane region; sequence LLGTVLYPFLAIWRLISNFLF. The Cytoplasmic segment spans residues 435 to 508; that stretch reads SNPPPAQTSV…TWNGNSTQQM (74 aa). A compositionally biased stretch (polar residues) spans 450–459; the sequence is ETSNLASSSN. The disordered stretch occupies residues 450 to 508; sequence ETSNLASSSNSEKREPVRKRVLEKRGEDFKKEGKIYRLRTQDDGEDENNTWNGNSTQQM. Residues 460 to 491 show a composition bias toward basic and acidic residues; that stretch reads SEKREPVRKRVLEKRGEDFKKEGKIYRLRTQD. Threonine 489 carries the post-translational modification Phosphothreonine. Residues 498 to 508 are compositionally biased toward polar residues; it reads NTWNGNSTQQM.

In terms of assembly, directly interacts with VCP. Interacts with UBQLN1. Forms a complex with VCP and UBQLN1.

It is found in the endoplasmic reticulum membrane. It localises to the nucleus envelope. Functionally, involved in endoplasmic reticulum-associated protein degradation (ERAD). Acts as a platform to recruit both UBQLN1 and VCP to the ER during ERAD. This Bos taurus (Bovine) protein is UBX domain-containing protein 4 (UBXN4).